The sequence spans 434 residues: Trehalose-phosphatase (434 aa).

Mg(2+)-binding residues include aspartate 156 and aspartate 158. Aspartate 158 (proton donor/acceptor) is an active-site residue. 275–277 (QKK) is a binding site for substrate. Aspartate 366 is a Mg(2+) binding site.

It belongs to the gob-1 trehalose phosphatase family. The cofactor is Mg(2+).

It catalyses the reaction alpha,alpha-trehalose 6-phosphate + H2O = alpha,alpha-trehalose + phosphate. Its function is as follows. Catalyzes the hydrolysis of trehalose 6-phosphate to trehalose and phosphate; prevents the accumulation of toxic levels of trehalose 6-phosphate. The chain is Trehalose-phosphatase (gob-1) from Caenorhabditis briggsae.